The chain runs to 1387 residues: DNA-directed RNA polymerase subunit beta' (1387 aa).

4 residues coordinate Zn(2+): cysteine 70, cysteine 72, cysteine 85, and cysteine 88. Positions 461, 463, and 465 each coordinate Mg(2+). Cysteine 808, cysteine 882, cysteine 889, and cysteine 892 together coordinate Zn(2+). The disordered stretch occupies residues 1367–1387 (QDEAKGVGQETPRLSGQEAAE).

The protein belongs to the RNA polymerase beta' chain family. As to quaternary structure, the RNAP catalytic core consists of 2 alpha, 1 beta, 1 beta' and 1 omega subunit. When a sigma factor is associated with the core the holoenzyme is formed, which can initiate transcription. Mg(2+) is required as a cofactor. Requires Zn(2+) as cofactor.

It catalyses the reaction RNA(n) + a ribonucleoside 5'-triphosphate = RNA(n+1) + diphosphate. DNA-dependent RNA polymerase catalyzes the transcription of DNA into RNA using the four ribonucleoside triphosphates as substrates. This chain is DNA-directed RNA polymerase subunit beta', found in Granulibacter bethesdensis (strain ATCC BAA-1260 / CGDNIH1).